We begin with the raw amino-acid sequence, 344 residues long: Protein Tob2 (344 aa).

Disordered stretches follow at residues 144 to 169 (GSQD…FIPR) and 191 to 225 (MKKG…SPTN). Residues 145–164 (SQDSSLSNSPSPSFGQSPSP) show a composition bias toward low complexity. Residues 194–210 (GGGAASGGGVASSGAGG) are compositionally biased toward gly residues. A compositionally biased stretch (low complexity) spans 211-225 (QQPPQQPRMARSPTN). The residue at position 254 (S254) is a Phosphoserine.

The protein belongs to the BTG family. In terms of assembly, associates with CAF1. In terms of tissue distribution, ubiquitous.

It is found in the cytoplasm. Its function is as follows. Anti-proliferative protein inhibits cell cycle progression from the G0/G1 to S phases. This chain is Protein Tob2 (TOB2), found in Homo sapiens (Human).